Here is a 197-residue protein sequence, read N- to C-terminus: Rac-like GTP-binding protein RHO1 (197 aa).

13–20 (GDGAVGKT) serves as a coordination point for GTP. The short motif at 35-43 (YVPTVFDNF) is the Effector region element. GTP contacts are provided by residues 60–64 (DTAGQ) and 118–121 (TKLD). Cysteine 194 is modified (cysteine methyl ester). Cysteine 194 carries S-geranylgeranyl cysteine lipidation. Positions 195–197 (SIL) are cleaved as a propeptide — removed in mature form.

Belongs to the small GTPase superfamily. Rho family. In terms of tissue distribution, expressed at the tip of pollen tubes.

It localises to the cytoplasm. Its subcellular location is the membrane. Functionally, inactive GDP-bound Rho GTPases reside in the cytosol, are found in a complex with Rho GDP-dissociation inhibitors (Rho GDIs), and are released from the GDI protein in order to translocate to membranes upon activation. May be involved in cell polarity control during the actin-dependent tip growth of pollen tubes. The chain is Rac-like GTP-binding protein RHO1 (RHO1) from Pisum sativum (Garden pea).